The primary structure comprises 737 residues: Cilium assembly protein DZIP1L (737 aa).

The segment at 1-293 is interaction with Rab8; that stretch reads MGFKGKYPQM…LKQSNEQFIQ (293 aa). A coiled-coil region spans residues 98–132; the sequence is VTDLKEAHTTAQEEIATLRKSLSESNNEVVQLHKR. A C2H2-type zinc finger spans residues 144–167; it reads YPCHLCTKNFISNEALNVHIGRKH. Disordered regions lie at residues 167–187, 214–267, 415–548, 624–682, and 698–737; these read HRVA…DRDK, ERNI…KEQL, SEFL…RKDA, KSPL…VSRD, and IRGA…DNLK. 2 stretches are compositionally biased toward basic and acidic residues: residues 244 to 266 and 415 to 438; these read EPKE…RKEQ and SEFL…KGSE. Over residues 457-469 the composition is skewed to polar residues; the sequence is SAGSSDSNPTYTK. Residues 492-510 are compositionally biased toward acidic residues; it reads SQEETENEEERSLTEEEGT. Residues 665 to 677 show a composition bias toward polar residues; it reads SSEQQTRSPSPQR. The segment covering 724–737 has biased composition (basic and acidic residues); it reads EDGKSFNDSDDNLK.

It belongs to the DZIP C2H2-type zinc-finger protein family. As to quaternary structure, component of a ciliary transition zone (TZ)-localized complex composed of DZIP1, Fam92 and Cby. Interacts directly with Cby. Interacts with Cep290 (via N-terminus). Interacts (via N-terminus) with Rab8. In terms of tissue distribution, in neurons of the second and third antennal segments, expressed at the tip of the dendrites.

It is found in the cytoplasm. The protein resides in the cytoskeleton. Its subcellular location is the microtubule organizing center. The protein localises to the centrosome. It localises to the centriole. It is found in the cilium basal body. In terms of biological role, component of the DZIP1-Fam92-Cby complex which promotes ciliogenesis in sensory neurons and spermatocytes by acting downstream of Cep290 to initiate early ciliary membrane formation and thus transition zone (TZ) assembly. During spermatogenesis, also regulates distal elongation of the basal-body and their docking (anchoring) to the plasma membrane and as a consequence, regulates the initiation and proper elongation of axonemal microtubules. Within the complex, required to recruit or stabilize Rab8, Fam92 and Cby at the distal basal body of cilia to promote early ciliary membrane formation and initiate TZ assembly. Also acts with Fam92 to restrict Cep290 localization to the proximal part of the TZ. May also be involved in recruitment or stabilization of Mks1 at the TZ. The sequence is that of Cilium assembly protein DZIP1L from Drosophila melanogaster (Fruit fly).